The chain runs to 131 residues: Lymphocyte antigen 6E (131 aa).

The first 20 residues, 1–20, serve as a signal peptide directing secretion; that stretch reads MKIFLPVLLAALLGVERASS. The region spanning 21–101 is the UPAR/Ly6 domain; the sequence is LMCFSCLNQK…CCQSFLCNFS (81 aa). 5 disulfide bridges follow: Cys-23/Cys-48, Cys-26/Cys-35, Cys-41/Cys-71, Cys-75/Cys-92, and Cys-93/Cys-98. Residue Asn-99 is glycosylated (N-linked (GlcNAc...) asparagine). A lipid anchor (GPI-anchor amidated serine) is attached at Ser-101. A propeptide spans 102 to 131 (removed in mature form); that stretch reads AADGGLRASVTLLGAGLLLSLLPALLRFGP.

Interacts with CHRNA4. In terms of tissue distribution, widely expressed, predominantly in liver, kidney, ovary, spleen and peripheral blood Leukocytes.

It localises to the cell membrane. Its function is as follows. GPI-anchored cell surface protein that regulates T-lymphocytes proliferation, differentiation, and activation. Regulates the T-cell receptor (TCR) signaling by interacting with component CD3Z/CD247 at the plasma membrane, leading to CD3Z/CD247 phosphorylation modulation. Restricts the entry of human coronaviruses, including SARS-CoV, MERS-CoV and SARS-CoV-2, by interfering with spike protein-mediated membrane fusion. Also plays an essential role in placenta formation by acting as the main receptor for syncytin-A (SynA). Therefore, participates in the normal fusion of syncytiotrophoblast layer I (SynT-I) and in the proper morphogenesis of both fetal and maternal vasculatures within the placenta. May also act as a modulator of nicotinic acetylcholine receptors (nAChRs) activity. (Microbial infection) Promotes entry, likely through an enhanced virus-cell fusion process, of various viruses including HIV-1, West Nile virus, dengue virus and Zika virus. In contrast, the paramyxovirus PIV5, which enters at the plasma membrane, does not require LY6E. Mechanistically, adopts a microtubule-like organization upon viral infection and enhances viral uncoating after endosomal escape. The sequence is that of Lymphocyte antigen 6E from Homo sapiens (Human).